Here is a 128-residue protein sequence, read N- to C-terminus: Large-conductance mechanosensitive channel (128 aa).

Transmembrane regions (helical) follow at residues 11-31 (FALK…AAFG) and 70-90 (GAFI…FIFV).

Belongs to the MscL family. In terms of assembly, homopentamer.

It is found in the cell membrane. Its function is as follows. Channel that opens in response to stretch forces in the membrane lipid bilayer. May participate in the regulation of osmotic pressure changes within the cell. The polypeptide is Large-conductance mechanosensitive channel (Listeria innocua serovar 6a (strain ATCC BAA-680 / CLIP 11262)).